Consider the following 201-residue polypeptide: Recombination protein RecR (201 aa).

The segment at 57–72 adopts a C4-type zinc-finger fold; that stretch reads CECCRTLTEEPLCRIC. Residues 81 to 176 enclose the Toprim domain; it reads GVLCIVETPA…NTTRIAHGVP (96 aa).

It belongs to the RecR family.

May play a role in DNA repair. It seems to be involved in an RecBC-independent recombinational process of DNA repair. It may act with RecF and RecO. The protein is Recombination protein RecR of Idiomarina loihiensis (strain ATCC BAA-735 / DSM 15497 / L2-TR).